Consider the following 32-residue polypeptide: ATP synthase 28 kDa subunit, mitochondrial (32 aa).

The protein localises to the mitochondrion. The protein resides in the mitochondrion inner membrane. Its function is as follows. Mitochondrial membrane ATP synthase (F(1)F(0) ATP synthase or Complex V) produces ATP from ADP in the presence of a proton gradient across the membrane which is generated by electron transport complexes of the respiratory chain. F-type ATPases consist of two structural domains, F(1) - containing the extramembraneous catalytic core and F(0) - containing the membrane proton channel, linked together by a central stalk and a peripheral stalk. During catalysis, ATP synthesis in the catalytic domain of F(1) is coupled via a rotary mechanism of the central stalk subunits to proton translocation. Part of the complex F(0) domain. This is ATP synthase 28 kDa subunit, mitochondrial from Spinacia oleracea (Spinach).